The following is a 139-amino-acid chain: Transcription factor E (139 aa).

The region spanning isoleucine 7–leucine 91 is the HTH TFE/IIEalpha-type domain.

It belongs to the TFE family. As to quaternary structure, monomer. Interaction with RNA polymerase subunits RpoF and RpoE is necessary for Tfe stimulatory transcription activity. Able to interact with Tbp and RNA polymerase in the absence of DNA promoter. Interacts both with the preinitiation and elongation complexes.

In terms of biological role, transcription factor that plays a role in the activation of archaeal genes transcribed by RNA polymerase. Facilitates transcription initiation by enhancing TATA-box recognition by TATA-box-binding protein (Tbp), and transcription factor B (Tfb) and RNA polymerase recruitment. Not absolutely required for transcription in vitro, but particularly important in cases where Tbp or Tfb function is not optimal. It dynamically alters the nucleic acid-binding properties of RNA polymerases by stabilizing the initiation complex and destabilizing elongation complexes. Seems to translocate with the RNA polymerase following initiation and acts by binding to the non template strand of the transcription bubble in elongation complexes. The protein is Transcription factor E of Nanoarchaeum equitans (strain Kin4-M).